The chain runs to 341 residues: 33 kDa chaperonin (341 aa).

2 disulfide bridges follow: Cys-245-Cys-247 and Cys-278-Cys-281.

It belongs to the HSP33 family. In terms of processing, under oxidizing conditions two disulfide bonds are formed involving the reactive cysteines. Under reducing conditions zinc is bound to the reactive cysteines and the protein is inactive.

The protein localises to the cytoplasm. Redox regulated molecular chaperone. Protects both thermally unfolding and oxidatively damaged proteins from irreversible aggregation. Plays an important role in the bacterial defense system toward oxidative stress. This is 33 kDa chaperonin from Thermus thermophilus (strain ATCC BAA-163 / DSM 7039 / HB27).